A 207-amino-acid chain; its full sequence is 8-oxoguanine DNA glycosylase/AP lyase (207 aa).

Catalysis depends on residues Lys128 and Asp146.

Belongs to the type-2 OGG1 family.

It catalyses the reaction 2'-deoxyribonucleotide-(2'-deoxyribose 5'-phosphate)-2'-deoxyribonucleotide-DNA = a 3'-end 2'-deoxyribonucleotide-(2,3-dehydro-2,3-deoxyribose 5'-phosphate)-DNA + a 5'-end 5'-phospho-2'-deoxyribonucleoside-DNA + H(+). In terms of biological role, catalyzes the excision of an oxidatively damaged form of guanine (7,8-dihydro-8-oxoguanine = 8-oxoG) from DNA. Also cleaves the DNA backbone at apurinic/apyrimidinic sites (AP sites). The protein is 8-oxoguanine DNA glycosylase/AP lyase of Saccharolobus solfataricus (strain ATCC 35092 / DSM 1617 / JCM 11322 / P2) (Sulfolobus solfataricus).